The chain runs to 211 residues: Adenylate kinase (211 aa).

Position 10–15 (10–15) interacts with ATP; it reads GSGKGT. The tract at residues 30 to 59 is NMP; the sequence is STGDLFRENILNSTTLGKEIKKIVEKGELV. AMP-binding positions include Thr-31, Arg-36, 57–59, 85–88, and Gln-92; these read ELV and GFPR. The segment at 121–158 is LID; the sequence is GRRICKSCNNIFNIYTLATKKNGICDVCKGDLYQREDD. Position 122 (Arg-122) interacts with ATP. Residues Cys-125 and Cys-128 each coordinate Zn(2+). 131–132 provides a ligand contact to ATP; it reads IF. Cys-145 and Cys-148 together coordinate Zn(2+). AMP-binding residues include Arg-155 and Arg-166. Val-194 contacts ATP.

It belongs to the adenylate kinase family. In terms of assembly, monomer.

It localises to the cytoplasm. The enzyme catalyses AMP + ATP = 2 ADP. It functions in the pathway purine metabolism; AMP biosynthesis via salvage pathway; AMP from ADP: step 1/1. In terms of biological role, catalyzes the reversible transfer of the terminal phosphate group between ATP and AMP. Plays an important role in cellular energy homeostasis and in adenine nucleotide metabolism. This chain is Adenylate kinase, found in Borrelia garinii subsp. bavariensis (strain ATCC BAA-2496 / DSM 23469 / PBi) (Borreliella bavariensis).